The primary structure comprises 512 residues: N-acetyltryptophan 6-hydroxylase ivoC (512 aa).

Residues 6 to 26 (LVFSFPAWALLLVLTLLYTLY) form a helical membrane-spanning segment. N118 carries an N-linked (GlcNAc...) asparagine glycan. A heme-binding site is contributed by C453.

It belongs to the cytochrome P450 family. Requires heme as cofactor.

It localises to the membrane. It participates in pigment biosynthesis. In terms of biological role, N-acetyltryptophan 6-hydroxylase; part of the pathway that mediates the biosynthesis of the gray-brown conidiophore pigment. The first step of the pathway is performed by the nonribosomal peptide synthetase ivoA that catalyzes ATP-dependent unidirectional stereoinversion of L-tryptophan to D-tryptophan with complete conversion. While the stereoinversion is catalyzed by the epimerization (E) domain of ivoA, the terminal condensation (C) domain stereoselectively hydrolyzes D-tryptophanyl-S-phosphopantetheine thioester and thus represents a non-canonical C domain function. D-tryptophan is acetylated, probably by an endogenous acetyltransferase. N-acetyltryptophan is further 6-hydroxylated into N-acetyl-6-hydroxytryptophan (AHT) by the cytochrome P450 monooxygenase ivoC. N-acetyl-6-hydroxytryptophan is substrate of the N-acetyl-6-hydroxytryptophan oxidase ivoB to produce the gray-brown conidiophore pigment. This is N-acetyltryptophan 6-hydroxylase ivoC from Emericella nidulans (strain FGSC A4 / ATCC 38163 / CBS 112.46 / NRRL 194 / M139) (Aspergillus nidulans).